The sequence spans 413 residues: MKFYLVGGAVRDNLLNLTVKDRDHMVVGATPQQMLEMGYRQVGKDFPVFLHPETGQEYALARTERKTGVGYGGFSCHASPDVTLEEDLLRRDLTINAIAQDEEGQLYDPYGGVDDINNRVLRHVSDAFVEDPLRVLRVARFAARFHRQGFTIADETLAMMTQISHSGELEALTAERVFLELDKALATDSPQVFIHVLNQCDALAILFPEIHALFGVPQPVKWHPEIDTGIHTLMVLEQAAKLCDDNSVRFAALVHDLGKALSPKEHLPKHHGHGQKGLALIKVLCARVRVPNDYRDLALLVSDLHQNIHQIEELRPDTLVKIFDKADLWRKPERLEQIALACEADAKGRLGQEEWSYPQADYFKQCFMAANKVAVKPIIEAGFKGAEIKAQLQLKRIEAVAEIKQNLNQTDSP.

2 residues coordinate ATP: G8 and R11. CTP is bound by residues G8 and R11. The Mg(2+) site is built by D21 and D23. R91, R137, and R140 together coordinate ATP. CTP is bound by residues R91, R137, and R140. Residues 228–329 (TGIHTLMVLE…VKIFDKADLW (102 aa)) enclose the HD domain.

It belongs to the tRNA nucleotidyltransferase/poly(A) polymerase family. Bacterial CCA-adding enzyme type 1 subfamily. Monomer. Can also form homodimers and oligomers. The cofactor is Mg(2+). Ni(2+) is required as a cofactor.

The catalysed reaction is a tRNA precursor + 2 CTP + ATP = a tRNA with a 3' CCA end + 3 diphosphate. It catalyses the reaction a tRNA with a 3' CCA end + 2 CTP + ATP = a tRNA with a 3' CCACCA end + 3 diphosphate. Its function is as follows. Catalyzes the addition and repair of the essential 3'-terminal CCA sequence in tRNAs without using a nucleic acid template. Adds these three nucleotides in the order of C, C, and A to the tRNA nucleotide-73, using CTP and ATP as substrates and producing inorganic pyrophosphate. tRNA 3'-terminal CCA addition is required both for tRNA processing and repair. Also involved in tRNA surveillance by mediating tandem CCA addition to generate a CCACCA at the 3' terminus of unstable tRNAs. While stable tRNAs receive only 3'-terminal CCA, unstable tRNAs are marked with CCACCA and rapidly degraded. This is Multifunctional CCA protein from Shewanella sediminis (strain HAW-EB3).